The following is a 308-amino-acid chain: UDP-N-acetylenolpyruvoylglucosamine reductase (308 aa).

One can recognise an FAD-binding PCMH-type domain in the interval Thr33–Gly197. Residue Arg176 is part of the active site. The active-site Proton donor is the Ser226. Glu296 is a catalytic residue.

Belongs to the MurB family. Requires FAD as cofactor.

The protein resides in the cytoplasm. It catalyses the reaction UDP-N-acetyl-alpha-D-muramate + NADP(+) = UDP-N-acetyl-3-O-(1-carboxyvinyl)-alpha-D-glucosamine + NADPH + H(+). It participates in cell wall biogenesis; peptidoglycan biosynthesis. Its function is as follows. Cell wall formation. This chain is UDP-N-acetylenolpyruvoylglucosamine reductase, found in Staphylococcus carnosus (strain TM300).